Here is a 272-residue protein sequence, read N- to C-terminus: 2-dehydro-3-deoxyphosphooctonate aldolase (272 aa).

This sequence belongs to the KdsA family.

The protein resides in the cytoplasm. The catalysed reaction is D-arabinose 5-phosphate + phosphoenolpyruvate + H2O = 3-deoxy-alpha-D-manno-2-octulosonate-8-phosphate + phosphate. It participates in carbohydrate biosynthesis; 3-deoxy-D-manno-octulosonate biosynthesis; 3-deoxy-D-manno-octulosonate from D-ribulose 5-phosphate: step 2/3. Its pathway is bacterial outer membrane biogenesis; lipopolysaccharide biosynthesis. This Geobacter sulfurreducens (strain ATCC 51573 / DSM 12127 / PCA) protein is 2-dehydro-3-deoxyphosphooctonate aldolase.